Reading from the N-terminus, the 58-residue chain is Small integral membrane protein 11 (58 aa).

The chain crosses the membrane as a helical span at residues Pro-10–Met-32. Positions Gly-29–Asn-58 form a coiled coil.

Expressed in heart, spleen, liver, stomach, muscle, lung, testis, skin, PBL and bone marrow.

Its subcellular location is the membrane. This chain is Small integral membrane protein 11, found in Homo sapiens (Human).